Reading from the N-terminus, the 161-residue chain is ATP synthase subunit b 1 (161 aa).

A helical transmembrane segment spans residues 5 to 25 (AETWVAVAFVLMVALFIYFGA).

The protein belongs to the ATPase B chain family. F-type ATPases have 2 components, F(1) - the catalytic core - and F(0) - the membrane proton channel. F(1) has five subunits: alpha(3), beta(3), gamma(1), delta(1), epsilon(1). F(0) has three main subunits: a(1), b(2) and c(10-14). The alpha and beta chains form an alternating ring which encloses part of the gamma chain. F(1) is attached to F(0) by a central stalk formed by the gamma and epsilon chains, while a peripheral stalk is formed by the delta and b chains.

The protein resides in the cell inner membrane. Its function is as follows. F(1)F(0) ATP synthase produces ATP from ADP in the presence of a proton or sodium gradient. F-type ATPases consist of two structural domains, F(1) containing the extramembraneous catalytic core and F(0) containing the membrane proton channel, linked together by a central stalk and a peripheral stalk. During catalysis, ATP synthesis in the catalytic domain of F(1) is coupled via a rotary mechanism of the central stalk subunits to proton translocation. Functionally, component of the F(0) channel, it forms part of the peripheral stalk, linking F(1) to F(0). This is ATP synthase subunit b 1 from Afipia carboxidovorans (strain ATCC 49405 / DSM 1227 / KCTC 32145 / OM5) (Oligotropha carboxidovorans).